We begin with the raw amino-acid sequence, 275 residues long: Bis(5'-nucleosyl)-tetraphosphatase, symmetrical (275 aa).

This sequence belongs to the Ap4A hydrolase family.

It carries out the reaction P(1),P(4)-bis(5'-adenosyl) tetraphosphate + H2O = 2 ADP + 2 H(+). Its function is as follows. Hydrolyzes diadenosine 5',5'''-P1,P4-tetraphosphate to yield ADP. In Haemophilus influenzae (strain PittEE), this protein is Bis(5'-nucleosyl)-tetraphosphatase, symmetrical.